We begin with the raw amino-acid sequence, 167 residues long: MPFLALELKCQLKGITDLRPDDTDSFHWHMKLKCTNCGEAPDHWQYVVLNEMLDVPGSRGEANLVEKCKLCGRVNTLTIVEDMFKSYNIEQNEKWQQIAVFDCRGLEPFDFDPRDEWIAKSVETGNAFHEIDLSEKEWVDFDDKAMEAVEISEMSSQFTTIRDPKKK.

Zn(2+)-binding residues include cysteine 34, cysteine 37, cysteine 68, and cysteine 71.

It belongs to the UPF0587 family.

This is UPF0587 protein F46B6.12 from Caenorhabditis elegans.